Reading from the N-terminus, the 311-residue chain is MTELTNADLLTAIVTPFTDEGTIDYPALDQLTEHLLQAGNNGFVVGGTTGETPTLSHDEKIELYTHFGRLIAGRVPVIAGTGSNNTAETIAFTNEVAQIEGIDYALVVVPPYNKPNQRGMLAHFTAVADAVELPLIIYNIPGRTGVKMETSTVLTLAEHPNIAGIKQCASLEEFQTLVENRPAGFAVYTGEDAQALTTKVLGGDGVISVAAHNYAPQMRAMYDALSAGNYQVAAKLQRWLTPRMAALFMFPSPSPVKAVLAAQGLATDHCRLPICDLTAEEKEQLATALGLPSDALAGQLPTDLGEGLTND.

Thr-49 is a binding site for pyruvate. Tyr-138 acts as the Proton donor/acceptor in catalysis. Catalysis depends on Lys-166, which acts as the Schiff-base intermediate with substrate. Pyruvate is bound at residue Ile-207.

This sequence belongs to the DapA family. In terms of assembly, homotetramer; dimer of dimers.

It localises to the cytoplasm. It carries out the reaction L-aspartate 4-semialdehyde + pyruvate = (2S,4S)-4-hydroxy-2,3,4,5-tetrahydrodipicolinate + H2O + H(+). It participates in amino-acid biosynthesis; L-lysine biosynthesis via DAP pathway; (S)-tetrahydrodipicolinate from L-aspartate: step 3/4. Catalyzes the condensation of (S)-aspartate-beta-semialdehyde [(S)-ASA] and pyruvate to 4-hydroxy-tetrahydrodipicolinate (HTPA). The polypeptide is 4-hydroxy-tetrahydrodipicolinate synthase (Limosilactobacillus fermentum (strain NBRC 3956 / LMG 18251) (Lactobacillus fermentum)).